The following is a 601-amino-acid chain: NADH-ubiquinone oxidoreductase chain 5 (601 aa).

The next 17 helical transmembrane spans lie at 5–25 (ITSL…TLSF), 37–54 (YMRN…IYID), 83–105 (YCLT…SLWY), 112–129 (TLFF…LFFL), 134–156 (LLQL…NWWH), 169–189 (IIYN…SALF), 209–231 (WLPL…LHPW), 240–260 (TPVS…FLLI), 271–291 (MIIS…ALCA), 300–320 (IIAF…GINQ), 323–343 (LAFL…LCSA), 363–383 (LILP…MGMP), 400–420 (MSYV…LTSI), 451–471 (PLIR…TFFL), 478–498 (FSIP…VSSL), 508–528 (FSHM…AIFH), and 581–601 (NYIT…ALYF).

Belongs to the complex I subunit 5 family.

Its subcellular location is the mitochondrion inner membrane. It catalyses the reaction a ubiquinone + NADH + 5 H(+)(in) = a ubiquinol + NAD(+) + 4 H(+)(out). Core subunit of the mitochondrial membrane respiratory chain NADH dehydrogenase (Complex I) that is believed to belong to the minimal assembly required for catalysis. Complex I functions in the transfer of electrons from NADH to the respiratory chain. The immediate electron acceptor for the enzyme is believed to be ubiquinone. The protein is NADH-ubiquinone oxidoreductase chain 5 (MT-ND5) of Myxine glutinosa (Atlantic hagfish).